The following is a 106-amino-acid chain: Phosphoribosyl-ATP pyrophosphatase (106 aa).

Belongs to the PRA-PH family.

It localises to the cytoplasm. It carries out the reaction 1-(5-phospho-beta-D-ribosyl)-ATP + H2O = 1-(5-phospho-beta-D-ribosyl)-5'-AMP + diphosphate + H(+). It participates in amino-acid biosynthesis; L-histidine biosynthesis; L-histidine from 5-phospho-alpha-D-ribose 1-diphosphate: step 2/9. This Methylobacillus flagellatus (strain ATCC 51484 / DSM 6875 / VKM B-1610 / KT) protein is Phosphoribosyl-ATP pyrophosphatase.